The sequence spans 820 residues: Serine/threonine-protein phosphatase 4 regulatory subunit 3-B (820 aa).

The 100-residue stretch at 1–100 (MSDTRRRVKV…DEIWEKICQV (100 aa)) folds into the WH1 domain. Residues 682 to 694 (ELWFNEDDEEEGE) show a composition bias toward acidic residues. 2 disordered regions span residues 682 to 711 (ELWF…DFPE) and 750 to 820 (AANG…RLGS). Basic and acidic residues predominate over residues 701 to 711 (EKTKPEDDFPE). 2 stretches are compositionally biased toward polar residues: residues 750–761 (AANGANSTNSKS) and 768–790 (PATS…STKG). The span at 798-809 (YPDDEDEEEEED) shows a compositional bias: acidic residues.

The protein belongs to the SMEK family. Serine/threonine-protein phosphatase 4 (PP4) occurs in different assemblies of the catalytic and one or more regulatory subunits.

Regulatory subunit of serine/threonine-protein phosphatase 4 (PP4). In Xenopus laevis (African clawed frog), this protein is Serine/threonine-protein phosphatase 4 regulatory subunit 3-B.